Reading from the N-terminus, the 211-residue chain is Thymidylate kinase (211 aa).

Residue 10-17 (GLDGSGKT) coordinates ATP.

This sequence belongs to the thymidylate kinase family.

The catalysed reaction is dTMP + ATP = dTDP + ADP. Functionally, phosphorylation of dTMP to form dTDP in both de novo and salvage pathways of dTTP synthesis. In Blochmanniella floridana, this protein is Thymidylate kinase.